A 232-amino-acid polypeptide reads, in one-letter code: Y-linked testis-specific protein 1 (232 aa).

This sequence belongs to the SPIN/STSY family. In terms of tissue distribution, expressed in testis (at protein level).

This Mus musculus (Mouse) protein is Y-linked testis-specific protein 1 (Ssty1).